Reading from the N-terminus, the 245-residue chain is NAD-dependent protein deacetylase (245 aa).

Positions Met-1–Lys-245 constitute a Deacetylase sirtuin-type domain. NAD(+) contacts are provided by Ala-26, Thr-30, Phe-37, Arg-38, Gln-105, Ile-107, Asp-108, and His-123. Residue Phe-37 coordinates nicotinamide. Nicotinamide-binding residues include Ile-107 and Asp-108. His-123 (proton acceptor) is an active-site residue. Positions 131, 134, 151, and 154 each coordinate Zn(2+). The NAD(+) site is built by Thr-190, Ser-191, Asn-216, and Ile-234.

This sequence belongs to the sirtuin family. Class U subfamily. It depends on Zn(2+) as a cofactor.

It localises to the cytoplasm. It catalyses the reaction N(6)-acetyl-L-lysyl-[protein] + NAD(+) + H2O = 2''-O-acetyl-ADP-D-ribose + nicotinamide + L-lysyl-[protein]. NAD-dependent protein deacetylase which modulates the activities of several enzymes which are inactive in their acetylated form. This Bacillus cereus (strain ATCC 14579 / DSM 31 / CCUG 7414 / JCM 2152 / NBRC 15305 / NCIMB 9373 / NCTC 2599 / NRRL B-3711) protein is NAD-dependent protein deacetylase.